We begin with the raw amino-acid sequence, 729 residues long: Fatty acid oxidation complex subunit alpha (729 aa).

The interval 1 to 189 is enoyl-CoA hydratase/isomerase; sequence MLYQSETLQL…KIGLVDAVVD (189 aa). Asp296 lines the substrate pocket. The 3-hydroxyacyl-CoA dehydrogenase stretch occupies residues 311–729; the sequence is AAPKLAAVLG…LLDVSTNQPA (419 aa). NAD(+) contacts are provided by residues Met324, Asp343, 400–402, Lys407, and Ser429; that span reads VVE. His450 (for 3-hydroxyacyl-CoA dehydrogenase activity) is an active-site residue. Asn453 provides a ligand contact to NAD(+). The substrate site is built by Asn500 and Tyr660.

This sequence in the N-terminal section; belongs to the enoyl-CoA hydratase/isomerase family. It in the C-terminal section; belongs to the 3-hydroxyacyl-CoA dehydrogenase family. In terms of assembly, heterotetramer of two alpha chains (FadB) and two beta chains (FadA).

The enzyme catalyses a (3S)-3-hydroxyacyl-CoA + NAD(+) = a 3-oxoacyl-CoA + NADH + H(+). It carries out the reaction a (3S)-3-hydroxyacyl-CoA = a (2E)-enoyl-CoA + H2O. It catalyses the reaction a 4-saturated-(3S)-3-hydroxyacyl-CoA = a (3E)-enoyl-CoA + H2O. The catalysed reaction is (3S)-3-hydroxybutanoyl-CoA = (3R)-3-hydroxybutanoyl-CoA. The enzyme catalyses a (3Z)-enoyl-CoA = a 4-saturated (2E)-enoyl-CoA. It carries out the reaction a (3E)-enoyl-CoA = a 4-saturated (2E)-enoyl-CoA. It functions in the pathway lipid metabolism; fatty acid beta-oxidation. In terms of biological role, involved in the aerobic and anaerobic degradation of long-chain fatty acids via beta-oxidation cycle. Catalyzes the formation of 3-oxoacyl-CoA from enoyl-CoA via L-3-hydroxyacyl-CoA. It can also use D-3-hydroxyacyl-CoA and cis-3-enoyl-CoA as substrate. The polypeptide is Fatty acid oxidation complex subunit alpha (Yersinia pseudotuberculosis serotype IB (strain PB1/+)).